Reading from the N-terminus, the 68-residue chain is Large ribosomal subunit protein bL32 (68 aa).

The protein belongs to the bacterial ribosomal protein bL32 family.

This chain is Large ribosomal subunit protein bL32, found in Onion yellows phytoplasma (strain OY-M).